A 323-amino-acid polypeptide reads, in one-letter code: MAKIGMDLNSFILEQERLYPNATGSLSRALVAIESATKVIASHVRMAGLADILGMAGKKNIQGEEVQKLDELSNNLLIQYLSQSGEFFALASEELDEPIFPEEGKDAKYVIAFDPLDGSSNIDVNISIGTIFSIHRRVNSDVSDFLQEGYKQVAAGYVIYGSSTMLVLSTGNGVNGFTLDPAVGMYLLSHPNMKIPEKGKIYSINESNDKKWIDAGLKEYIESLKDEGYTSRYIGSMVADVHRTLIKGGIFAYPADVKNKNGKLRLLYEASPMAFLTVQAGGIATTGKEDILNIKPTDIHQRVPVFLGGKYEMEKLKSMLKNG.

Residues E93, D114, L116, and D117 each coordinate Mg(2+). Substrate is bound by residues 117–120, N205, Y233, and K263; that span reads DGSS. A Mg(2+)-binding site is contributed by E269.

This sequence belongs to the FBPase class 1 family. Homotetramer. Mg(2+) is required as a cofactor.

It is found in the cytoplasm. It carries out the reaction beta-D-fructose 1,6-bisphosphate + H2O = beta-D-fructose 6-phosphate + phosphate. It participates in carbohydrate biosynthesis; gluconeogenesis. This Sulfurihydrogenibium sp. (strain YO3AOP1) protein is Fructose-1,6-bisphosphatase class 1.